The primary structure comprises 413 residues: uncharacterized protein (413 aa).

A helical transmembrane segment spans residues 25–47 (IVNLSALLPLITSTTSTAGSIIT).

Its subcellular location is the host membrane. This is an uncharacterized protein from Acidianus sp. F28 (AFV-2).